The primary structure comprises 306 residues: Leucine-rich repeat-containing protein 59 (306 aa).

Met1 is subject to N-acetylmethionine. An N-acetylthreonine; in Leucine-rich repeat-containing protein 59, N-terminally processed modification is found at Thr2. At 2–244 (TKAGSKGGNL…KPPPRKHTRS (243 aa)) the chain is on the cytoplasmic side. 5 LRR repeats span residues 10–31 (NLRDKLDGNELDLSLSDLNEVP), 40–62 (KATVLDLSCNKLTTLPSDFCGLT), 63–84 (HLVKLDLSKNKLRQLPADFGRL), 86–107 (NLQHLDLLNNRLVTLPVSFAQL), and 109–128 (SLKWLDLKDNPLDPVLAKVA). Phosphoserine is present on residues Ser23 and Ser25. N6-succinyllysine is present on Lys73. Lys135 is modified (N6-acetyllysine). Residues 152-216 (QADQERERQR…KAAKREQEKK (65 aa)) are a coiled coil. Over residues 175-221 (AKQRAKEAQERELRKREKAEEKERRRKEYDALKAAKREQEKKPKKET) the composition is skewed to basic and acidic residues. The disordered stretch occupies residues 175-241 (AKQRAKEAQE…RPRKPPPRKH (67 aa)). Basic residues predominate over residues 229-241 (SSSRPRKPPPRKH). A helical membrane pass occupies residues 245–265 (WAVLKLLLLLLLCVAGGLVAC). Topologically, residues 266 to 306 (RVTELQQQPLCTSVNTIYDNAVRGLRSHDILQWVLQTDSQQ) are lumenal.

As to quaternary structure, can form homodimers. Interacts with SGO1. Interacts with FGF1.

It localises to the microsome membrane. Its subcellular location is the endoplasmic reticulum membrane. It is found in the nucleus envelope. Its function is as follows. Required for nuclear import of FGF1, but not that of FGF2. Might regulate nuclear import of exogenous FGF1 by facilitating interaction with the nuclear import machinery and by transporting cytosolic FGF1 to, and possibly through, the nuclear pores. The sequence is that of Leucine-rich repeat-containing protein 59 (LRRC59) from Bos taurus (Bovine).